A 1216-amino-acid chain; its full sequence is FK506-binding protein 15 (1216 aa).

Methionine 1 carries the N-acetylmethionine modification. Serine 14 and serine 23 each carry phosphoserine. The disordered stretch occupies residues 41 to 68 (YTAPKQPKKGQGTAAGNQTAPKPAPATT). A compositionally biased stretch (low complexity) spans 59 to 68 (TAPKPAPATT). Residues 71 to 168 (SSVLFATAVH…AVSFNKQVCV (98 aa)) are important for function in growth cone organization. At lysine 91 the chain carries N6-acetyllysine. In terms of domain architecture, PPIase FKBP-type spans 196–289 (GDSLEVAYTG…VFEVEVRRVK (94 aa)). Positions 292–357 (RDSGSDGHSV…QLTVNSNPDT (66 aa)) are disordered. Over residues 303–322 (SRDSAAPSPIPASDSLSADP) the composition is skewed to low complexity. A phosphoserine mark is found at serine 306, serine 310, serine 342, serine 344, and serine 617. The span at 340–356 (SKSNSLSEQLTVNSNPD) shows a compositional bias: polar residues. Coiled-coil stretches lie at residues 519 to 790 (MAVN…AAAE) and 820 to 865 (QQYR…RLEK). Residues 927–1216 (HQEEEEEEEE…DDDDDIGWLG (290 aa)) form a disordered region. Positions 929–940 (EEEEEEEEEEEE) are enriched in acidic residues. Position 948 is a phosphoserine (serine 948). Residues 954-964 (PATPGMPPAPP) show a composition bias toward pro residues. Residues 983 to 994 (TTPLPLQALPTP) show a composition bias toward low complexity. Serine 1018 is modified (phosphoserine). Residues 1036-1045 (TSIPPKPPGP) show a composition bias toward pro residues. Serine 1050 and serine 1091 each carry phosphoserine. Phosphothreonine is present on threonine 1093. Residues serine 1108, serine 1153, serine 1157, serine 1159, and serine 1190 each carry the phosphoserine modification. The residue at position 1198 (threonine 1198) is a Phosphothreonine. Positions 1202 to 1216 (GDDDDDDDDDIGWLG) are enriched in acidic residues.

Belongs to the FKBP-type PPIase family. As to quaternary structure, interacts with WIP and actin. Interacts with TBC1D23. Expressed in brain, with highest levels in the granular cell layer of cerebellum and in the granule cell layer of dentate gyrus.

Its subcellular location is the cytoplasm. It is found in the cell projection. It localises to the axon. The protein localises to the early endosome. Functionally, involved in the transport of early endosomes at the level of transition between microfilament-based and microtubule-based movement. May be involved in the cytoskeletal organization of neuronal growth cones. Seems to be inactive as a PPIase. The protein is FK506-binding protein 15 (Fkbp15) of Mus musculus (Mouse).